We begin with the raw amino-acid sequence, 100 residues long: Ubiquitin-related modifier 1 homolog (100 aa).

A 1-thioglycine modification is found at glycine 100. Glycine 100 is covalently cross-linked (Glycyl lysine isopeptide (Gly-Lys) (interchain with K-? in acceptor proteins)).

It belongs to the URM1 family. Post-translationally, C-terminal thiocarboxylation occurs in 2 steps, it is first acyl-adenylated (-COAMP) via the hesA/moeB/thiF part of the MOCS3 homolog, then thiocarboxylated (-COSH) via the rhodanese domain of the MOCS3 homolog.

The protein localises to the cytoplasm. Its pathway is tRNA modification; 5-methoxycarbonylmethyl-2-thiouridine-tRNA biosynthesis. Acts as a sulfur carrier required for 2-thiolation of mcm(5)S(2)U at tRNA wobble positions of cytosolic tRNA(Lys), tRNA(Glu) and tRNA(Gln). Serves as sulfur donor in tRNA 2-thiolation reaction by being thiocarboxylated (-COSH) at its C-terminus by MOCS3. The sulfur is then transferred to tRNA to form 2-thiolation of mcm(5)S(2)U. Also acts as a ubiquitin-like protein (UBL) that is covalently conjugated via an isopeptide bond to lysine residues of target proteins. The thiocarboxylated form serves as substrate for conjugation and oxidative stress specifically induces the formation of UBL-protein conjugates. The chain is Ubiquitin-related modifier 1 homolog from Caenorhabditis elegans.